The chain runs to 151 residues: Large ribosomal subunit protein bL9 (151 aa).

The protein belongs to the bacterial ribosomal protein bL9 family.

Functionally, binds to the 23S rRNA. The chain is Large ribosomal subunit protein bL9 from Carboxydothermus hydrogenoformans (strain ATCC BAA-161 / DSM 6008 / Z-2901).